The sequence spans 49 residues: Large ribosomal subunit protein bL33B (49 aa).

It belongs to the bacterial ribosomal protein bL33 family.

The protein is Large ribosomal subunit protein bL33B of Oceanobacillus iheyensis (strain DSM 14371 / CIP 107618 / JCM 11309 / KCTC 3954 / HTE831).